Consider the following 214-residue polypeptide: uncharacterized protein (214 aa).

URF2 product may be involved in the transfer of iron-sulfur clusters to the NADH dehydrogenase complex. It may also be required for the assembly of the NADH dehydrogenase complex. This is an uncharacterized protein from Paracoccus denitrificans.